The sequence spans 467 residues: Ammonium transporter Rh type C (467 aa).

Topologically, residues 1–9 are cytoplasmic; the sequence is MAWNTNLRW. The helical transmembrane segment at 10–30 threads the bilayer; sequence RLPLLCLVLEVAMVVLFGLFV. The Extracellular segment spans residues 31 to 61; sequence RYSPDADSSWSNEKRKGNITSDLENEFYYRY. The N-linked (GlcNAc...) asparagine glycan is linked to asparagine 48. A helical membrane pass occupies residues 62-82; the sequence is PSFQDVHVMVFLGFGFLMTFL. Topologically, residues 83–86 are cytoplasmic; that stretch reads QRYG. A helical transmembrane segment spans residues 87 to 107; the sequence is YCALGFNFLLAALGVQWALLM. The Extracellular portion of the chain corresponds to 108–131; it reads QGWFQYTKDRLILLGIKNLIDADS. Helical transmembrane passes span 132 to 152 and 153 to 173; these read CVAS…PVQM and LLMT…LLHV. Residues 174–179 are Extracellular-facing; the sequence is LEVKDA. The helical transmembrane segment at 180–200 threads the bilayer; that stretch reads GGSITIHIFGAYFGLTVTWIL. Residues 201–219 are Cytoplasmic-facing; the sequence is YRHNLDHSRERQSSVYHSN. Residues 220–240 traverse the membrane as a helical segment; sequence LFAMIGTLFLWIYWPSFNSAM. Residues 241–251 lie on the Extracellular side of the membrane; that stretch reads SNYGDAQHRAA. A helical transmembrane segment spans residues 252–272; sequence INTYCSLAASVLTSVAMSSVL. The Cytoplasmic portion of the chain corresponds to 273–282; that stretch reads HKKGKLDMVH. Residues 283 to 303 traverse the membrane as a helical segment; the sequence is IQNATLAGGVGVGTAAEMMLM. Residue proline 304 is a topological domain, extracellular. Residues 305 to 325 form a helical membrane-spanning segment; sequence YGALIVGFICGAVSTLGFVYL. Topologically, residues 326–343 are cytoplasmic; sequence TPFLESRLRIQDTCGIHN. Residues 344-364 traverse the membrane as a helical segment; that stretch reads LHGIPGLIGAIVGAVTAAYAS. Over 365-391 the chain is Extracellular; sequence PDGDRGFVYPFGFHNEKDEKVQGRFQA. The chain crosses the membrane as a helical span at residues 392-412; that stretch reads FGLLLTLAIAMVGGTIMGLIL. Topologically, residues 413–467 are cytoplasmic; sequence KLPFWGQAMDEDCFDDSIYWEMHEEKSSSPEDHTHKPSVPTEPVEQPTSSATLAP. The segment covering 436–447 has biased composition (basic and acidic residues); the sequence is EEKSSSPEDHTH. The segment at 436 to 467 is disordered; sequence EEKSSSPEDHTHKPSVPTEPVEQPTSSATLAP. The span at 458–467 shows a compositional bias: polar residues; the sequence is QPTSSATLAP.

The protein belongs to the ammonium transporter (TC 2.A.49) family. Rh subfamily. In terms of assembly, homotrimer. In terms of processing, N-glycosylated.

It localises to the cell membrane. The protein resides in the apical cell membrane. It carries out the reaction NH4(+)(in) = NH4(+)(out). It catalyses the reaction methylamine(out) = methylamine(in). The catalysed reaction is CO2(out) = CO2(in). In terms of biological role, ammonium transporter involved in the maintenance of acid-base homeostasis. Transports ammonium and its related derivative methylammonium across the plasma membrane of epithelial cells likely contributing to renal transepithelial ammonia transport and ammonia metabolism. Postulated to primarily mediate an electroneutral bidirectional transport of NH3 ammonia species according to a mechanism that implies interaction of an NH4(+) ion with acidic residues of the pore entry followed by dissociation of NH4(+) into NH3 and H(+). As a result NH3 transits through the central pore and is protonated on the extracellular side reforming NH4(+). May act as a CO2 channel providing for renal acid secretion. The sequence is that of Ammonium transporter Rh type C (RHCG) from Oryctolagus cuniculus (Rabbit).